Consider the following 116-residue polypeptide: Non-specific lipid-transfer protein (116 aa).

Residues 1–23 (MASMKVVCVALIMCIVIAPMAES) form the signal peptide. Disulfide bonds link C27/C74, C37/C51, C52/C97, and C72/C111.

It belongs to the plant LTP family.

In terms of biological role, plant non-specific lipid-transfer proteins transfer phospholipids as well as galactolipids across membranes. May play a role in wax or cutin deposition in the cell walls of expanding epidermal cells and certain secretory tissues. The polypeptide is Non-specific lipid-transfer protein (Cicer arietinum (Chickpea)).